The sequence spans 376 residues: Chaperone protein DnaJ (376 aa).

One can recognise a J domain in the interval Asp5–Gly70. A CR-type zinc finger spans residues Gly136–Thr214. Cys149, Cys152, Cys166, Cys169, Cys188, Cys191, Cys202, and Cys205 together coordinate Zn(2+). CXXCXGXG motif repeat units lie at residues Cys149–Gly156, Cys166–Gly173, Cys188–Gly195, and Cys202–Gly209.

Belongs to the DnaJ family. As to quaternary structure, homodimer. Zn(2+) is required as a cofactor.

It is found in the cytoplasm. In terms of biological role, participates actively in the response to hyperosmotic and heat shock by preventing the aggregation of stress-denatured proteins and by disaggregating proteins, also in an autonomous, DnaK-independent fashion. Unfolded proteins bind initially to DnaJ; upon interaction with the DnaJ-bound protein, DnaK hydrolyzes its bound ATP, resulting in the formation of a stable complex. GrpE releases ADP from DnaK; ATP binding to DnaK triggers the release of the substrate protein, thus completing the reaction cycle. Several rounds of ATP-dependent interactions between DnaJ, DnaK and GrpE are required for fully efficient folding. Also involved, together with DnaK and GrpE, in the DNA replication of plasmids through activation of initiation proteins. This chain is Chaperone protein DnaJ, found in Burkholderia mallei (strain NCTC 10229).